Here is a 66-residue protein sequence, read N- to C-terminus: Large ribosomal subunit protein bL35 (66 aa).

Residues 1-23 form a disordered region; the sequence is MPKMKTHRASAKRFKRTANGGLK.

This sequence belongs to the bacterial ribosomal protein bL35 family.

The polypeptide is Large ribosomal subunit protein bL35 (Lactobacillus helveticus (strain DPC 4571)).